The sequence spans 238 residues: uncharacterized protein (238 aa).

The protein to M.thermoautotrophicum MTH564.

This is an uncharacterized protein from Methanocaldococcus jannaschii (strain ATCC 43067 / DSM 2661 / JAL-1 / JCM 10045 / NBRC 100440) (Methanococcus jannaschii).